Reading from the N-terminus, the 44-residue chain is Photosystem I reaction center subunit IX (44 aa).

The chain crosses the membrane as a helical span at residues 7 to 27 (YLSVAPVISTLWFGSLAGLLI).

The protein belongs to the PsaJ family.

Its subcellular location is the plastid. The protein resides in the chloroplast thylakoid membrane. Its function is as follows. May help in the organization of the PsaE and PsaF subunits. This is Photosystem I reaction center subunit IX from Ceratophyllum demersum (Rigid hornwort).